Reading from the N-terminus, the 403-residue chain is MLWPLPLFLLCAGSLAQDLEFQLVAPESVTVEEGLCVHVPCSVFYPSIKLTLGPVTGSWLRKGVSLHEDSPVATSDPRQLVQKATQGRFQLLGDPQKHDCSLFIRDAQKNDTGMYFFRVVREPFVRYSYKKSQLSLHVTSLSRTPDIIIPGTLEAGYPSNLTCSVPWACEQGTPPTFSWMSTALTSLSSRTTDSSVLTFTPQPQDHGTKLTCLVTFSGAGVTVERTIQLNVTRKSGQMRELVLVAVGEATVKLLILGLCLVFLIVMFCRRKTTKLSVHMGCENPIKRQEAITSYNHCLSPTASDAVTPGCSIHRLISRTPRCTAILRIQDPYRRTHLRNRAVSTLRFPWISWEGSLRSTQRSKCTKLCSPVKNLCPLWLPVDNSCIPLIPEWVMLLCVSLTLS.

A signal peptide spans 1–16 (MLWPLPLFLLCAGSLA). The 104-residue stretch at 17–120 (QDLEFQLVAP…DTGMYFFRVV (104 aa)) folds into the Ig-like V-type domain. Residues 18-240 (DLEFQLVAPE…VTRKSGQMRE (223 aa)) are Extracellular-facing. Cystine bridges form between cysteine 36/cysteine 169, cysteine 41/cysteine 100, and cysteine 163/cysteine 212. A glycan (N-linked (GlcNAc...) asparagine) is linked at asparagine 110. Arginine 118 is an N-acetylneuraminate binding site. The region spanning 145–228 (PDIIIPGTLE…AGVTVERTIQ (84 aa)) is the Ig-like C2-type domain. An N-linked (GlcNAc...) asparagine glycan is attached at asparagine 160. Asparagine 230 carries an N-linked (GlcNAc...) asparagine glycan. A helical transmembrane segment spans residues 241 to 267 (LVLVAVGEATVKLLILGLCLVFLIVMF). The Cytoplasmic segment spans residues 268-403 (CRRKTTKLSV…MLLCVSLTLS (136 aa)).

The protein belongs to the immunoglobulin superfamily. SIGLEC (sialic acid binding Ig-like lectin) family. In terms of assembly, homodimer; disulfide-linked. Interacts with PTPN6/SHP-1 and PTPN11/SHP-2 upon phosphorylation. Interacts with C1QA (via C-terminus); this interaction activates CD33 inhibitory motifs. In terms of processing, glycosylated. Phosphorylation is involved in binding to PTPN6 and PTPN11. In terms of tissue distribution, expressed on myeloid precursors in the bone marrow. In the peripheral blood, mostly expressed on granulocytes.

It is found in the cell membrane. Functionally, sialic-acid-binding immunoglobulin-like lectin (Siglec) that plays a role in mediating cell-cell interactions and in maintaining immune cells in a resting state. Preferentially binds sialic acid to the short O-linked glycans of certain mucins. In Mus musculus (Mouse), this protein is Myeloid cell surface antigen CD33 (Cd33).